The sequence spans 238 residues: MRPAGRSANQVRPVTLTRNYTKHAEGSVLVEFGDTKVLCTASIEEGVPRFLKGQGQGWITAEYGMLPRATHTRNAREAAKGKQGGRTMEIQRLIARALRAAVDLKTLGEFTITLDCDVIQADGGTRTASITGACVALADALNKLVANGKLKTNPMKGMVAAVSVGIVNGEAICDLEYVEDSAAETDMNVVMTEDGRIIEVQGTAEGEPFSHEELLTLLALARGGIESIVATQKAALEN.

Phosphate is bound by residues Arg-86 and 124–126; that span reads GTR.

Belongs to the RNase PH family. As to quaternary structure, homohexameric ring arranged as a trimer of dimers.

It carries out the reaction tRNA(n+1) + phosphate = tRNA(n) + a ribonucleoside 5'-diphosphate. Its function is as follows. Phosphorolytic 3'-5' exoribonuclease that plays an important role in tRNA 3'-end maturation. Removes nucleotide residues following the 3'-CCA terminus of tRNAs; can also add nucleotides to the ends of RNA molecules by using nucleoside diphosphates as substrates, but this may not be physiologically important. Probably plays a role in initiation of 16S rRNA degradation (leading to ribosome degradation) during starvation. The protein is Ribonuclease PH of Salmonella agona (strain SL483).